A 515-amino-acid polypeptide reads, in one-letter code: Maturase K (515 aa).

The protein belongs to the intron maturase 2 family. MatK subfamily.

The protein resides in the plastid. Its subcellular location is the chloroplast. Functionally, usually encoded in the trnK tRNA gene intron. Probably assists in splicing its own and other chloroplast group II introns. This is Maturase K from Pinus koraiensis (Korean pine).